We begin with the raw amino-acid sequence, 557 residues long: Resveratrol cleavage oxygenase 1 (557 aa).

The disordered stretch occupies residues 1-46; it reads MAILNDPPSSTTILSLHTPDVPPPSKPTPATTSHPQDSRNPRNLTS. Piceatannol contacts are provided by Tyr144 and Lys177. Tyr144 and Lys177 together coordinate trans-resveratrol. Fe cation-binding residues include His211, His262, and His334. Glu404 provides a ligand contact to piceatannol. Glu404 contributes to the trans-resveratrol binding site. His523 is a Fe cation binding site.

This sequence belongs to the carotenoid oxygenase family. It depends on Fe(2+) as a cofactor.

The catalysed reaction is trans-resveratrol + O2 = 3,5-dihydroxybenzaldehyde + 4-hydroxybenzaldehyde. The enzyme catalyses piceatannol + O2 = 3,5-dihydroxybenzaldehyde + 3,4-dihydroxybenzaldehyde. Its function is as follows. Dioxygenase that cleaves the interphenyl C-alpha-C-beta double bond of resveratrol to yield 3,5-dihydroxybenzaldehyde and 4-hydroxybenzaldehyde. Also cleaves piceatannol, a compound that differs from resveratrol only in the occurrence of an additional hydroxyl group, which leads to the production of 3,4-dihydroxybenzaldehyde and 3,5-hydroxybenzaldehyde. The chain is Resveratrol cleavage oxygenase 1 from Botryotinia fuckeliana (strain B05.10) (Noble rot fungus).